A 509-amino-acid polypeptide reads, in one-letter code: Lysine--tRNA ligase (509 aa).

Residues Glu-419 and Glu-426 each coordinate Mg(2+).

Belongs to the class-II aminoacyl-tRNA synthetase family. As to quaternary structure, homodimer. The cofactor is Mg(2+).

Its subcellular location is the cytoplasm. The catalysed reaction is tRNA(Lys) + L-lysine + ATP = L-lysyl-tRNA(Lys) + AMP + diphosphate. In Methylobacillus flagellatus (strain ATCC 51484 / DSM 6875 / VKM B-1610 / KT), this protein is Lysine--tRNA ligase.